A 437-amino-acid polypeptide reads, in one-letter code: GTPase Obg (437 aa).

The 159-residue stretch at 2 to 160 (SMFLDTAKIS…RELQLELKIL (159 aa)) folds into the Obg domain. Residues 127–146 (GNIRFATPRNPAPEIAENGE) are disordered. The OBG-type G domain occupies 161–338 (ADVGLVGFPS…LLEATAELLD (178 aa)). GTP is bound by residues 167-174 (GFPSVGKS), 192-196 (FTTIV), 214-217 (DLPG), 284-287 (NKMD), and 319-321 (SSL). 2 residues coordinate Mg(2+): S174 and T194. The region spanning 359 to 437 (GFNEEERPFE…IGNFEFEFVD (79 aa)) is the OCT domain.

This sequence belongs to the TRAFAC class OBG-HflX-like GTPase superfamily. OBG GTPase family. Monomer. Mg(2+) serves as cofactor.

It localises to the cytoplasm. In terms of biological role, an essential GTPase which binds GTP, GDP and possibly (p)ppGpp with moderate affinity, with high nucleotide exchange rates and a fairly low GTP hydrolysis rate. Plays a role in control of the cell cycle, stress response, ribosome biogenesis and in those bacteria that undergo differentiation, in morphogenesis control. In Streptococcus thermophilus (strain ATCC BAA-491 / LMD-9), this protein is GTPase Obg.